The chain runs to 180 residues: Large ribosomal subunit protein uL5 (180 aa).

It belongs to the universal ribosomal protein uL5 family. In terms of assembly, part of the 50S ribosomal subunit; part of the 5S rRNA/L5/L18/L25 subcomplex. Contacts the 5S rRNA and the P site tRNA. Forms a bridge to the 30S subunit in the 70S ribosome.

Its function is as follows. This is one of the proteins that bind and probably mediate the attachment of the 5S RNA into the large ribosomal subunit, where it forms part of the central protuberance. In the 70S ribosome it contacts protein S13 of the 30S subunit (bridge B1b), connecting the 2 subunits; this bridge is implicated in subunit movement. Contacts the P site tRNA; the 5S rRNA and some of its associated proteins might help stabilize positioning of ribosome-bound tRNAs. The protein is Large ribosomal subunit protein uL5 of Chlamydia trachomatis serovar A (strain ATCC VR-571B / DSM 19440 / HAR-13).